An 82-amino-acid polypeptide reads, in one-letter code: Cytochrome b559 subunit alpha (82 aa).

The helical transmembrane segment at 22-36 threads the bilayer; sequence VIHSITIPALFIAGW. H24 is a heme binding site.

It belongs to the PsbE/PsbF family. Heterodimer of an alpha subunit and a beta subunit. PSII is composed of 1 copy each of membrane proteins PsbA, PsbB, PsbC, PsbD, PsbE, PsbF, PsbH, PsbI, PsbJ, PsbK, PsbL, PsbM, PsbT, PsbX, PsbY, PsbZ, Psb30/Ycf12, peripheral proteins PsbO, CyanoQ (PsbQ), PsbU, PsbV and a large number of cofactors. It forms dimeric complexes. The cofactor is heme b.

The protein localises to the cellular thylakoid membrane. Functionally, this b-type cytochrome is tightly associated with the reaction center of photosystem II (PSII). PSII is a light-driven water:plastoquinone oxidoreductase that uses light energy to abstract electrons from H(2)O, generating O(2) and a proton gradient subsequently used for ATP formation. It consists of a core antenna complex that captures photons, and an electron transfer chain that converts photonic excitation into a charge separation. The sequence is that of Cytochrome b559 subunit alpha from Trichodesmium erythraeum (strain IMS101).